Consider the following 334-residue polypeptide: Glycerol-1-phosphate dehydrogenase [NAD(P)+] (334 aa).

NAD(+) contacts are provided by residues 77–81 (GKPID) and 99–102 (TTAS). Asp-104 provides a ligand contact to substrate. NAD(+) is bound at residue Ser-108. Asp-147 is a substrate binding site. Positions 147 and 225 each coordinate Zn(2+). His-229 provides a ligand contact to substrate. Position 246 (His-246) interacts with Zn(2+).

This sequence belongs to the glycerol-1-phosphate dehydrogenase family. Requires Zn(2+) as cofactor.

Its subcellular location is the cytoplasm. It carries out the reaction sn-glycerol 1-phosphate + NAD(+) = dihydroxyacetone phosphate + NADH + H(+). The enzyme catalyses sn-glycerol 1-phosphate + NADP(+) = dihydroxyacetone phosphate + NADPH + H(+). It functions in the pathway membrane lipid metabolism; glycerophospholipid metabolism. Its function is as follows. Catalyzes the NAD(P)H-dependent reduction of dihydroxyacetonephosphate (DHAP or glycerone phosphate) to glycerol 1-phosphate (G1P). The G1P thus generated is used as the glycerophosphate backbone of phospholipids in the cellular membranes of Archaea. The sequence is that of Glycerol-1-phosphate dehydrogenase [NAD(P)+] from Methanococcus vannielii (strain ATCC 35089 / DSM 1224 / JCM 13029 / OCM 148 / SB).